Reading from the N-terminus, the 83-residue chain is Large ribosomal subunit protein eL14 (83 aa).

It belongs to the eukaryotic ribosomal protein eL14 family.

This chain is Large ribosomal subunit protein eL14, found in Thermococcus gammatolerans (strain DSM 15229 / JCM 11827 / EJ3).